The primary structure comprises 148 residues: MLKVKIVRLNKQAFLPVYATRHAAGMDVSACLEAPVVVAPGSAELIATGLAIELPEGYEAQLRPRSGLALRNLISLPNSPATIDADYRGEVKVILVNHGRDPFKVSHGDRIAQMVVARVEQVSFVEVDTLGDTERGEGGFGHTGMGQG.

Residues 65-67, N78, 82-84, and K92 each bind substrate; these read RSG and TID.

Belongs to the dUTPase family. The cofactor is Mg(2+).

The enzyme catalyses dUTP + H2O = dUMP + diphosphate + H(+). The protein operates within pyrimidine metabolism; dUMP biosynthesis; dUMP from dCTP (dUTP route): step 2/2. In terms of biological role, this enzyme is involved in nucleotide metabolism: it produces dUMP, the immediate precursor of thymidine nucleotides and it decreases the intracellular concentration of dUTP so that uracil cannot be incorporated into DNA. The chain is Deoxyuridine 5'-triphosphate nucleotidohydrolase from Chlorobium luteolum (strain DSM 273 / BCRC 81028 / 2530) (Pelodictyon luteolum).